Consider the following 391-residue polypeptide: N-acetylaspartylglutamate synthase A (391 aa).

An ATP-grasp domain is found at 115 to 300 (FQELAGHGVP…VGGIIADYTM (186 aa)). ATP contacts are provided by residues Lys-154, 189 to 199 (QKYVKESHGKD), and Arg-215. Positions 260, 273, and 275 each coordinate Mg(2+). Mn(2+) contacts are provided by Asp-260, Glu-273, and Asn-275. Ser-319 bears the Phosphoserine mark. The span at 341–350 (TINSGSTSSE) shows a compositional bias: polar residues. A disordered region spans residues 341-379 (TINSGSTSSESEPELGEIRDSSASTMGAPPSMLPEPGYN).

The protein belongs to the RimK family. The cofactor is Mg(2+). Mn(2+) serves as cofactor.

It is found in the cytoplasm. The enzyme catalyses N-acetyl-L-aspartate + L-glutamate + ATP = N-acetyl-L-aspartyl-L-glutamate + ADP + phosphate + H(+). It catalyses the reaction N-acetyl-L-aspartate + 2 L-glutamate + 2 ATP = N-acetyl-L-aspartyl-L-glutamyl-L-glutamate + 2 ADP + 2 phosphate + 2 H(+). In terms of biological role, catalyzes the synthesis of N-acetyl-L-aspartyl-L-glutamate (NAAG) and N-acetyl-L-aspartyl-L-glutamyl-L-glutamate. This Homo sapiens (Human) protein is N-acetylaspartylglutamate synthase A (RIMKLA).